Here is a 925-residue protein sequence, read N- to C-terminus: Antiviral innate immune response receptor RIG-I (925 aa).

2 consecutive CARD domains span residues 1–87 (MTTE…GLYE) and 92–172 (WDFK…KTLK). (Microbial infection) Phosphoserine is present on serine 8. At serine 8 the chain carries Phosphoserine. Glycyl lysine isopeptide (Lys-Gly) (interchain with G-Cter in ubiquitin) cross-links involve residues lysine 48, lysine 96, lysine 154, and lysine 164. Position 170 is a phosphothreonine (threonine 170). Residues lysine 172, lysine 181, lysine 193, and lysine 203 each participate in a glycyl lysine isopeptide (Lys-Gly) (interchain with G-Cter in ubiquitin) cross-link. The interaction with ZC3HAV1 stretch occupies residues 218 to 925 (ECQNLSENSC…IPFDPAEMSK (708 aa)). A Helicase ATP-binding domain is found at 251–430 (ALPAMKGKNT…DEALDYICKL (180 aa)). Residue 264-271 (APTGCGKT) coordinates ATP. A DECH box motif is present at residues 372–375 (DECH). Asparagine 495 and asparagine 549 each carry (Microbial infection) Deamidated asparagine; by herpes simplex virus 1/HHV-1 UL37. A Helicase C-terminal domain is found at 610–776 (KLEDLCFILQ…RLQTWDEAVF (167 aa)). Residues 735-925 (GSKCFLLTSN…IPFDPAEMSK (191 aa)) are mediates interaction with RNF135. Threonine 770 is modified (phosphothreonine; by CK2). One can recognise an RLR CTR domain in the interval 794 to 925 (QEKPKPVPDK…IPFDPAEMSK (132 aa)). Residue cysteine 810 coordinates Zn(2+). A Glycyl lysine isopeptide (Lys-Gly) (interchain with G-Cter in ubiquitin) cross-link involves residue lysine 812. Zn(2+) is bound at residue cysteine 813. Serine 854 and serine 855 each carry phosphoserine; by CK2. Lysine 858 carries the post-translational modification N6-acetyllysine. Residues cysteine 864 and cysteine 869 each coordinate Zn(2+). Residue lysine 909 is modified to N6-acetyllysine.

This sequence belongs to the helicase family. RLR subfamily. Monomer; maintained as a monomer in an autoinhibited state. Upon binding of viral RNAs and conformational shift, homooligomerizes and forms filaments on these molecules. Interacts (via tandem CARD domain) with MAVS/IPS1 promoting its filamentation. Interacts with DHX58/LGP2, IKBKE, TBK1 and STING1. Interacts (via CARD domain) with TRIM25 (via SPRY domain). Interacts (double-stranded RNA-bound oligomeric form) with RNF135 (homodimer); involved in RNA length-dependent activation of the RIG-I signaling pathway. Interacts with CYLD. Interacts with NLRC5; blocks the interaction of MAVS/IPS1 to RIGI. Interacts with SRC. Interacts with DDX60. Interacts with isoform 2 of ZC3HAV1 (via zinc-fingers) in an RNA-dependent manner. Interacts (via tandem CARD domain) with SEC14L1; the interaction is direct and impairs the interaction of RIGI with MAVS/IPS1. Interacts with VCP/p97; interaction is direct and allows the recruitment of RNF125 and subsequent ubiquitination and degradation. Interacts with NOP53; may regulate RIGI through USP15-mediated 'Lys-63'-linked deubiquitination. Interacts with SIGLEC10, CBL and PTPN11; within a negative feedback loop leading to RIGI degradation. Interacts with LRRC25. Interacts with ZCCHC3; leading to activation of RIGI. Interacts with RNF123. Interacts with UBE2D3 and UBE2N; E2 ubiquitin ligases involved in RNF135-mediated ubiquitination of RIGI and activation of the RIG-I signaling pathway. Interacts with IFIT3. Interacts with DDX3X. Interacts with RTN3. Interacts with ARL16; this interaction is GTP-dependent and induced upon viral infection; this interaction suppresses the RNA sensing activity of RIGI. Interacts with DHX16; this interaction enhances RIGI-mediated antiviral response. Interacts with IRGM; promoting RIGI degradation. Interacts with IFI6; this interaction inhibits RIGI activation. Interacts with ECSIT; this interaction bridges RIGI to the MAVS complex at the mitochondrion. Interacts with YWHAE; this interaction drives RIGI at the mitochondrion. As to quaternary structure, (Microbial infection) Interacts with protein Z of Guanarito virus, Machupo virus, Junin arenavirus and Sabia virus. This interaction disrupts its interaction with MAVS/IPS1, impeding downstream IRF3 and NF-kappa-B activation and resulting in decreased IFN-beta induction. In terms of assembly, (Microbial infection) Interacts (via CARD domain) with Human respiratory syncytial virus A non-structural protein 2 (NS2) and this interaction disrupts its interaction with MAVS/IPS1, impeding downstream IRF3 activation. (Microbial infection) Interacts with Rotavirus A non-structural protein 1 (NSP1) and this interaction induces down-regulation of RIGI. As to quaternary structure, (Microbial infection) Interacts with paramyxoviruses (Sendai virus, Nipah virus, Measles virus and Parainfluenza virus 5) protein V; this interaction inhibits TRIM25-mediated ubiquitination of RIG-I and prevents downstream RIG-I signaling thereby inhibiting the IFN responses. In terms of assembly, (Microbial infection) Interacts with herpes simplex virus 1 protein US11; this interaction prevents the interaction of MAVS/IPS1 to RIGI. (Microbial infection) Interacts with herpes simplex virus 1 protein UL37; this interaction deaminates RIGI and inhibits its activation. As to quaternary structure, (Microbial infection) Interacts with Severe fever with thrombocytopenia virus (SFTSV) NSs; this interaction this interaction sequesters RIGI in NSs-induced cytoplasmic inclusion bodies thereby inhibiting the IFN responses. In terms of processing, phosphorylated in resting cells and dephosphorylated in RNA virus-infected cells. Phosphorylation at Thr-770, Ser-854 and Ser-855 results in inhibition of its activity while dephosphorylation at these sites results in its activation. Post-translationally, ubiquitinated. 'Lys-63' ubiquitination by RNF135, which occurs after RNA-binding and homodimerization, releases the autoinhibition of the CARD domains by the RLR CTR domain, an essential step in the activation of the RIG-I signaling pathway. Lys-172 is the critical site of ubiquitination for MAVS/IPS1 binding and to induce anti-viral signal transduction. Lys-154, Lys-164 and Lys-172 are shared sites for RNF135-mediated and TRIM4-mediated ubiquitination. Also undergoes 'Lys-48' ubiquitination at Lys-181 by RNF125 that leads to proteasomal degradation. 'Lys-48' ubiquitination follows viral infection and is enhanced by 'Lys-63'-linked ubiquitination of the CARD domains that promotes interaction with VCP/p97 and subsequent recruitment of RNF125. Within a negative feedback loop involving SIGLEC10 and PTPN11, 'Lys-48' ubiquitination at Lys-812 by CBL also elicits the proteasomal degradation of RIGI. Deubiquitinated by CYLD, a protease that selectively cleaves 'Lys-63'-linked ubiquitin chains. Also probably deubiquitinated by USP17L2/USP17 that cleaves 'Lys-48'- and 'Lys-63'-linked ubiquitin chains and positively regulates the receptor. Ubiquitinated by TRIM40 via 'Lys-48'-linked ubiquitination; leading to proteasomal degradation. Deubiquitinated by USP27X that cleaves 'Lys-63'-linked ubiquitin chains and inhibits the innate immune receptor activity. Deubiquitinated by USP3 that also cleaves 'Lys-63'-linked ubiquitin chains and inhibits the innate immune receptor activity. Undergoes 'Lys-48'-linked ubiquitination catalyzed by MARCHF5 at Lys-193 and Lys-203, leading to proteasomal degradation. Phosphorylated at Ser-8 and Thr-170; these phosphorylations suppresse the TRIM25-mediated 'Lys-63'-linked ubiquitination of RIG-I and thereby prevents RIG-I downstream signaling. Dephosphorylated by phosphatases PPP1CA/PPP1CC; this step is essential to activate RIGI and initiate downstream signaling. In terms of processing, ISGylated. Conjugated to ubiquitin-like protein ISG15 upon IFN-beta stimulation. ISGylation negatively regulates its function in antiviral signaling response. Post-translationally, sumoylated, probably by MUL1; inhibiting its polyubiquitination. Acetylated in response to RNA virus infection. Deacetylated by HDAC6 in the presence of viral mRNAs which is required for detection of viral RNA by RIGI. In terms of processing, (Microbial infection) Deamidated on Asn-495 and Asn-549 by herpes simplex virus 1 protein UL37. These modifications eliminate RIGI detection of viral RNA and restriction of viral replication. Post-translationally, degraded via selective autophagy following interaction with IRGM. IRGM promotes RIGI recruitment to autophagosome membranes, promoting its SQSTM1/p62-dependent autophagic degradation. (Microbial infection) Cleaved by the protease 3C of coxsackievirus B3, poliovirus and enterovirus 71 allowing the virus to disrupt the host type I interferon production. In terms of processing, (Microbial infection) Phosphorylated at Ser-8 by herpes simplex virus 1 protein US3 leading to inhibition of critical RIGI activation steps. As to expression, present in vascular smooth cells (at protein level).

Its subcellular location is the cytoplasm. The protein resides in the cell projection. It localises to the ruffle membrane. It is found in the cytoskeleton. The protein localises to the cell junction. Its subcellular location is the tight junction. It carries out the reaction ATP + H2O = ADP + phosphate + H(+). In terms of biological role, innate immune receptor that senses cytoplasmic viral nucleic acids and activates a downstream signaling cascade leading to the production of type I interferons and pro-inflammatory cytokines. Forms a ribonucleoprotein complex with viral RNAs on which it homooligomerizes to form filaments. The homooligomerization allows the recruitment of RNF135 an E3 ubiquitin-protein ligase that activates and amplifies the RIG-I-mediated antiviral signaling in an RNA length-dependent manner through ubiquitination-dependent and -independent mechanisms. Upon activation, associates with mitochondria antiviral signaling protein (MAVS/IPS1) that activates the IKK-related kinases TBK1 and IKBKE which in turn phosphorylate the interferon regulatory factors IRF3 and IRF7, activating transcription of antiviral immunological genes including the IFN-alpha and IFN-beta interferons. Ligands include 5'-triphosphorylated ssRNAs and dsRNAs but also short dsRNAs (&lt;1 kb in length). In addition to the 5'-triphosphate moiety, blunt-end base pairing at the 5'-end of the RNA is very essential. Overhangs at the non-triphosphorylated end of the dsRNA RNA have no major impact on its activity. A 3'overhang at the 5'triphosphate end decreases and any 5'overhang at the 5' triphosphate end abolishes its activity. Detects both positive and negative strand RNA viruses including members of the families Paramyxoviridae: Human respiratory syncytial virus and measles virus (MeV), Rhabdoviridae: vesicular stomatitis virus (VSV), Orthomyxoviridae: influenza A and B virus, Flaviviridae: Japanese encephalitis virus (JEV), hepatitis C virus (HCV), dengue virus (DENV) and west Nile virus (WNV). It also detects rotaviruses and reoviruses. Detects and binds to SARS-CoV-2 RNAs which is inhibited by m6A RNA modifications. Also involved in antiviral signaling in response to viruses containing a dsDNA genome such as Epstein-Barr virus (EBV). Detects dsRNA produced from non-self dsDNA by RNA polymerase III, such as Epstein-Barr virus-encoded RNAs (EBERs). May play important roles in granulocyte production and differentiation, bacterial phagocytosis and in the regulation of cell migration. In Homo sapiens (Human), this protein is Antiviral innate immune response receptor RIG-I.